The chain runs to 479 residues: Ribosomal lysine N-methyltransferase 2 (479 aa).

In terms of domain architecture, SET spans Pro-22–Gly-325. Tyr-324 provides a ligand contact to S-adenosyl-L-methionine.

This sequence belongs to the class V-like SAM-binding methyltransferase superfamily. RKM2 family.

In terms of biological role, S-adenosyl-L-methionine-dependent protein-lysine N-methyltransferase that trimethylates 60S ribosomal protein L12 (RPL12A and RPL12B) at 'Lys-4' and 'Lys-11'. In Saccharomyces cerevisiae (strain ATCC 204508 / S288c) (Baker's yeast), this protein is Ribosomal lysine N-methyltransferase 2.